We begin with the raw amino-acid sequence, 562 residues long: NAD-dependent malic enzyme (562 aa).

Tyrosine 101 functions as the Proton donor in the catalytic mechanism. Residue arginine 154 coordinates NAD(+). The active-site Proton acceptor is the lysine 172. Glutamate 243, aspartate 244, and aspartate 267 together coordinate a divalent metal cation. NAD(+)-binding residues include aspartate 267 and asparagine 415.

Belongs to the malic enzymes family. In terms of assembly, homotetramer. Requires Mg(2+) as cofactor. Mn(2+) is required as a cofactor.

The enzyme catalyses (S)-malate + NAD(+) = pyruvate + CO2 + NADH. The catalysed reaction is oxaloacetate + H(+) = pyruvate + CO2. In Vibrio parahaemolyticus serotype O3:K6 (strain RIMD 2210633), this protein is NAD-dependent malic enzyme.